The following is a 339-amino-acid chain: Replication factor C subunit 2 (339 aa).

Y48–K55 provides a ligand contact to ATP.

The protein belongs to the activator 1 small subunits family. Heterotetramer of subunits RFC2, RFC3, RFC4 and RFC5 that can form a complex with RFC1. In terms of tissue distribution, expressed in roots, leaves, shoot apical meristem (SAM), flag leaves and panicles.

It localises to the nucleus. In terms of biological role, may be involved in DNA replication and thus regulate cell proliferation. The polypeptide is Replication factor C subunit 2 (RFC2) (Oryza sativa subsp. japonica (Rice)).